A 474-amino-acid chain; its full sequence is Sialyltransferase-like protein 1 (474 aa).

The Cytoplasmic segment spans residues 1–14 (MRSHQAGRKLPLLQ). The helical; Signal-anchor for type II membrane protein transmembrane segment at 15–35 (LLGCVAVFSVFVFTIQSSFFA) threads the bilayer. Over 36-474 (DNNRKLDLQP…CVRHPLKLDT (439 aa)) the chain is Lumenal. N-linked (GlcNAc...) asparagine glycans are attached at residues Asn-88, Asn-120, Asn-155, and Asn-243. The interval 376-421 (RLQRSQQPTSSKRDGSGQFGNCKVWGDADPTKGPVSGSPDMSETRK) is disordered.

It belongs to the glycosyltransferase 29 family. Highly expressed in inflorescences and siliques and at lower levels in roots, leaves and stems.

It is found in the golgi apparatus membrane. Required for normal pollen grain germination and pollen tube growth. May not be required for pollen development and female gametophytic function. The sequence is that of Sialyltransferase-like protein 1 from Arabidopsis thaliana (Mouse-ear cress).